The chain runs to 81 residues: Sec-independent protein translocase protein TatA (81 aa).

Residues 1–21 (MGGISIWQLLIVALIVILLFG) traverse the membrane as a helical segment. Positions 34-81 (GAVKGFKNAMTPEDENKSLDDKEKDQTAATSQQAAEKQPETESKDKQA) are disordered. 2 stretches are compositionally biased toward basic and acidic residues: residues 47-59 (DENK…EKDQ) and 70-81 (KQPETESKDKQA).

It belongs to the TatA/E family. The Tat system comprises two distinct complexes: a TatABC complex, containing multiple copies of TatA, TatB and TatC subunits, and a separate TatA complex, containing only TatA subunits. Substrates initially bind to the TatABC complex, which probably triggers association of the separate TatA complex to form the active translocon.

The protein localises to the cell inner membrane. Functionally, part of the twin-arginine translocation (Tat) system that transports large folded proteins containing a characteristic twin-arginine motif in their signal peptide across membranes. TatA could form the protein-conducting channel of the Tat system. The sequence is that of Sec-independent protein translocase protein TatA from Shewanella frigidimarina (strain NCIMB 400).